We begin with the raw amino-acid sequence, 81 residues long: Short neurotoxin 1 (81 aa).

The N-terminal stretch at 1-21 is a signal peptide; it reads MKTLLLTLVVVTIVCLDLGYT. 4 disulfide bridges follow: Cys24-Cys43, Cys38-Cys60, Cys62-Cys73, and Cys74-Cys79.

The protein belongs to the three-finger toxin family. Short-chain subfamily. Type I alpha-neurotoxin sub-subfamily. Expressed by the venom gland.

The protein localises to the secreted. Its function is as follows. Binds to muscle nicotinic acetylcholine receptor (nAChR) and inhibit acetylcholine from binding to the receptor, thereby impairing neuromuscular transmission. The chain is Short neurotoxin 1 from Austrelaps superbus (Lowland copperhead snake).